Consider the following 100-residue polypeptide: Large ribosomal subunit protein uL23 (100 aa).

This sequence belongs to the universal ribosomal protein uL23 family. In terms of assembly, part of the 50S ribosomal subunit. Contacts protein L29, and trigger factor when it is bound to the ribosome.

In terms of biological role, one of the early assembly proteins it binds 23S rRNA. One of the proteins that surrounds the polypeptide exit tunnel on the outside of the ribosome. Forms the main docking site for trigger factor binding to the ribosome. The polypeptide is Large ribosomal subunit protein uL23 (Edwardsiella ictaluri (strain 93-146)).